A 193-amino-acid chain; its full sequence is Ion-translocating oxidoreductase complex subunit A (193 aa).

Helical transmembrane passes span 5–25 (LLLF…FLGL), 47–67 (FVMT…LIPL), 72–92 (LRTL…EMVV), 102–122 (LLGI…VALL), 134–154 (ALYG…FAAI), and 171–191 (AIAL…SGLV).

This sequence belongs to the NqrDE/RnfAE family. In terms of assembly, the complex is composed of six subunits: RnfA, RnfB, RnfC, RnfD, RnfE and RnfG.

The protein localises to the cell inner membrane. In terms of biological role, part of a membrane-bound complex that couples electron transfer with translocation of ions across the membrane. The protein is Ion-translocating oxidoreductase complex subunit A of Citrobacter koseri (strain ATCC BAA-895 / CDC 4225-83 / SGSC4696).